The following is a 746-amino-acid chain: MFFLLALLTELGRLQAHVGSEGIFLHVTVPRKILSNDSEVSERKMIYIITIDGQPYTLHLRKQSFLPQNFLVYTYNEAGSLHSESPYFMMHCHYQGYAAEFPNSFVTLSICSGLRGFLQFENVSYGIEPLESSARFEHIIYQMKNNDPNVSILAENYSHIWQKDQSYKVPLNSQKKNLSKLLPQYLEIYIIVEKALYDYMGSEMMAVTQKIVQVIGLVNTMFTQFRLTVTLSSLELWSNENQISTSGDADDILQRFLAWKRDYLILRPHDIAYLLVYRKHPKYVGATFPGTICNESYDAGIAMYPDAIDLEGFSVIIAQLLGLNVGLTYDDITQCFCLRATCIMNHEAMSARGIKIFSNCSMHDYRYFVSKFEAKCLQKLSNLQPLHQNQPVCGNGILESNEECDCGNKKECQFKKCCDYNTCKLKGSVKCGSGPCCTSKCELSIVGTPCRKSVDPECDFTEYCNGTSSDCVPDTYALNGHLCKLGTAYCYNGQCQTTDNQCAKIFGKGAQGAPFACFKEVNSLHETSENCGFKNSQPLPCERKDVLCGKLACVQPHKNAYKSDIQYTVYSYIQDHVCVSIATGSSMRSDGTDNAYVADGTMCGPEMYCVNKTCRKVHLTGYNCNTTTKCKGKGICNNFGNCQCFPGHKPPDCKFQFGSPGGSIDDGNFQKSDEFYTEKGYNAHWNNWFILSFYIVLPFFIIFTIVIFKRNEIRKLCNRENTELIHPLYQKAMMWNINIAQNFRSK.

The first 16 residues, 1-16 (MFFLLALLTELGRLQA), serve as a signal peptide directing secretion. A propeptide spanning residues 17–183 (HVGSEGIFLH…QKKNLSKLLP (167 aa)) is cleaved from the precursor. Residues Asn36, Asn122, Asn149, Asn156, Asn177, and Asn294 are each glycosylated (N-linked (GlcNAc...) asparagine). Topologically, residues 177-687 (NLSKLLPQYL…EKGYNAHWNN (511 aa)) are extracellular. A Peptidase M12B domain is found at 184 to 381 (QYLEIYIIVE…FEAKCLQKLS (198 aa)). 4 disulfides stabilise this stretch: Cys293/Cys376, Cys335/Cys360, Cys337/Cys342, and Cys450/Cys471. 4 N-linked (GlcNAc...) asparagine glycosylation sites follow: Asn359, Asn465, Asn611, and Asn625. The Disintegrin domain occupies 390 to 479 (QPVCGNGILE…DCVPDTYALN (90 aa)). In terms of domain architecture, EGF-like spans 620-654 (TGYNCNTTTKCKGKGICNNFGNCQCFPGHKPPDCK). 3 cysteine pairs are disulfide-bonded: Cys624/Cys636, Cys630/Cys642, and Cys644/Cys653. Residues 688 to 708 (WFILSFYIVLPFFIIFTIVIF) form a helical membrane-spanning segment. Topologically, residues 709 to 746 (KRNEIRKLCNRENTELIHPLYQKAMMWNINIAQNFRSK) are cytoplasmic.

The prodomain and the metalloprotease-like domain are cleaved during the epididymal maturation of the spermatozoa. Expressed predominantly in adult and prepubertal testis.

Its subcellular location is the membrane. Sperm surface membrane protein that may be involved in spermatogenesis and fertilization. This is a non catalytic metalloprotease-like protein. This chain is Disintegrin and metalloproteinase domain-containing protein 18 (ADAM18), found in Macaca fascicularis (Crab-eating macaque).